The sequence spans 175 residues: Ribulose bisphosphate carboxylase small subunit, chloroplastic (175 aa).

The transit peptide at 1-46 (MAPSVMASSATTVAPFQGLKSTAGMPVARRSGNSSFGNVSNGGRIR) directs the protein to the chloroplast. An interaction with large subunit region spans residues 60 to 64 (ETLSY).

Belongs to the RuBisCO small chain family. As to quaternary structure, heterohexadecamer of 8 large and 8 small subunits.

The protein resides in the plastid. It is found in the chloroplast. In terms of biological role, ruBisCO catalyzes two reactions: the carboxylation of D-ribulose 1,5-bisphosphate, the primary event in carbon dioxide fixation, as well as the oxidative fragmentation of the pentose substrate. Both reactions occur simultaneously and in competition at the same active site. Although the small subunit is not catalytic it is essential for maximal activity. In Oryza sativa subsp. indica (Rice), this protein is Ribulose bisphosphate carboxylase small subunit, chloroplastic.